The primary structure comprises 166 residues: Phosphopantetheine adenylyltransferase (166 aa).

Ser-10 is a substrate binding site. ATP is bound by residues 10 to 11 and His-18; that span reads SF. Substrate-binding residues include Lys-42, Ala-79, and Arg-93. ATP contacts are provided by residues 94 to 96, Glu-104, and 129 to 135; these read GLR and VRPITAT.

It belongs to the bacterial CoaD family. In terms of assembly, homohexamer. It depends on Mg(2+) as a cofactor.

Its subcellular location is the cytoplasm. The enzyme catalyses (R)-4'-phosphopantetheine + ATP + H(+) = 3'-dephospho-CoA + diphosphate. It functions in the pathway cofactor biosynthesis; coenzyme A biosynthesis; CoA from (R)-pantothenate: step 4/5. Functionally, reversibly transfers an adenylyl group from ATP to 4'-phosphopantetheine, yielding dephospho-CoA (dPCoA) and pyrophosphate. The polypeptide is Phosphopantetheine adenylyltransferase (Methylobacterium sp. (strain 4-46)).